The chain runs to 342 residues: tRNA N6-adenosine threonylcarbamoyltransferase (342 aa).

Residues H111 and H115 each contribute to the Fe cation site. Substrate contacts are provided by residues 133–137 (AVSGG), D166, G179, D183, and N273. D301 is a Fe cation binding site.

Belongs to the KAE1 / TsaD family. Fe(2+) serves as cofactor.

The protein localises to the cytoplasm. It carries out the reaction L-threonylcarbamoyladenylate + adenosine(37) in tRNA = N(6)-L-threonylcarbamoyladenosine(37) in tRNA + AMP + H(+). Required for the formation of a threonylcarbamoyl group on adenosine at position 37 (t(6)A37) in tRNAs that read codons beginning with adenine. Is involved in the transfer of the threonylcarbamoyl moiety of threonylcarbamoyl-AMP (TC-AMP) to the N6 group of A37, together with TsaE and TsaB. TsaD likely plays a direct catalytic role in this reaction. This chain is tRNA N6-adenosine threonylcarbamoyltransferase, found in Syntrophotalea carbinolica (strain DSM 2380 / NBRC 103641 / GraBd1) (Pelobacter carbinolicus).